A 295-amino-acid polypeptide reads, in one-letter code: NAD kinase (295 aa).

Asp72 (proton acceptor) is an active-site residue. NAD(+) is bound by residues 72–73, 146–147, Arg157, Lys174, Asp176, 187–192, and Gln247; these read DG, ND, and TAYALS.

Belongs to the NAD kinase family. A divalent metal cation is required as a cofactor.

It is found in the cytoplasm. It carries out the reaction NAD(+) + ATP = ADP + NADP(+) + H(+). Its function is as follows. Involved in the regulation of the intracellular balance of NAD and NADP, and is a key enzyme in the biosynthesis of NADP. Catalyzes specifically the phosphorylation on 2'-hydroxyl of the adenosine moiety of NAD to yield NADP. This Azotobacter vinelandii (strain DJ / ATCC BAA-1303) protein is NAD kinase.